We begin with the raw amino-acid sequence, 183 residues long: Glutathione-regulated potassium-efflux system ancillary protein KefG (183 aa).

It belongs to the NAD(P)H dehydrogenase (quinone) family. KefG subfamily. Interacts with KefB.

The protein resides in the cell inner membrane. The catalysed reaction is a quinone + NADH + H(+) = a quinol + NAD(+). It carries out the reaction a quinone + NADPH + H(+) = a quinol + NADP(+). Functionally, regulatory subunit of a potassium efflux system that confers protection against electrophiles. Required for full activity of KefB. The sequence is that of Glutathione-regulated potassium-efflux system ancillary protein KefG from Shigella flexneri serotype 5b (strain 8401).